The chain runs to 469 residues: Coiled-coil domain-containing protein 6 (469 aa).

Over residues 1–10 the composition is skewed to acidic residues; that stretch reads MADSASESDT. The tract at residues 1–37 is disordered; the sequence is MADSASESDTDAAGGGPAAMQSSCSATSGGSGGGGGG. The residue at position 2 (Ala2) is an N-acetylalanine. Ser45 carries the phosphoserine modification. Residues 47–320 adopt a coiled-coil conformation; the sequence is FRLEELTNRL…LCRQLSESES (274 aa). Repeat copies occupy residues 99–127, 128–156, and 157–185. Residues 99 to 228 are 5 X 29 AA tandem repeats; that stretch reads EQEEEFISNT…AEKRILQEKL (130 aa). Residues 186 to 199 form a 4; approximate repeat; it reads EQLRREKIDLENTL. Residues 200–228 form repeat 5; the sequence is EQEQEALVNRLWKRMDKLEAEKRILQEKL. Phosphoserine is present on residues Ser233, Ser237, Ser242, Ser247, Ser277, and Ser316. Residues 335 to 362 form a disordered region; it reads AQGLRPRTVSSPIPYTPSPSSSRPISPG. At Thr342 the chain carries Phosphothreonine. The span at 344–361 shows a compositional bias: low complexity; that stretch reads SSPIPYTPSPSSSRPISP. Phosphoserine is present on residues Ser356 and Ser360. Arg380 is subject to Omega-N-methylarginine. Ser388 and Ser406 each carry phosphoserine. The interval 394–469 is disordered; that stretch reads QHMGASHGIT…QHPVHPSSQP (76 aa). Pro residues predominate over residues 419-444; the sequence is PTPPPSPNTQSPVQPPPPPPPPPMQP. Residues 435–444 carry the SH3-binding motif; the sequence is PPPPPPPMQP. A compositionally biased stretch (low complexity) spans 460–469; that stretch reads QHPVHPSSQP.

It localises to the cytoplasm. The protein localises to the cytoskeleton. The protein is Coiled-coil domain-containing protein 6 (Ccdc6) of Mus musculus (Mouse).